We begin with the raw amino-acid sequence, 302 residues long: Oxaloacetate decarboxylase 2 (302 aa).

Position 50 (serine 50) interacts with substrate. Aspartate 88 provides a ligand contact to Mg(2+). Arginine 159 and histidine 235 together coordinate substrate.

It belongs to the isocitrate lyase/PEP mutase superfamily. Oxaloacetate decarboxylase family. Homotetramer; dimer of dimers. It depends on Mg(2+) as a cofactor.

It catalyses the reaction oxaloacetate + H(+) = pyruvate + CO2. Catalyzes the decarboxylation of oxaloacetate into pyruvate. Seems to play a role in maintaining cellular concentrations of bicarbonate and pyruvate. This Pseudomonas putida (strain W619) protein is Oxaloacetate decarboxylase 2.